Reading from the N-terminus, the 963-residue chain is Protein NLP2 (963 aa).

Residues 635–716 enclose the RWP-RK domain; it reads RRPGEKRRTK…IDSVQGVQGS (82 aa). Residues 734 to 755 show a composition bias toward polar residues; sequence MSGTGTSFKNPNAQTENGVSAQ. The segment at 734–794 is disordered; the sequence is MSGTGTSFKN…QSTNTGTTSN (61 aa). A compositionally biased stretch (low complexity) spans 756–794; it reads GTAAAPKSPPSSSCSHSSGSSTCCSTGANQSTNTGTTSN. Residues 862–945 form the PB1 domain; sequence ASKVKATFGE…RTIKISVHEA (84 aa).

It localises to the nucleus. Its function is as follows. Probable transcription factor. This chain is Protein NLP2 (NLP2), found in Arabidopsis thaliana (Mouse-ear cress).